The sequence spans 515 residues: MDEFHRYGKEDNSRQQCFLYPLFFQEDLYAISHDHYLDGSSSSEPMEHLSSNDQFSFLTVKRLIGQIRQQNHSIVLFVNCAPNPLADCKKSSYSESVLEGLTLVLEVPFSIRSKYSVEGMNEWKSFRSIHSIFPFLEDKFPHSNYISDARIPYSIHPEILVRTFRRLIRDAPSLHPLRSVLYEYRNSPENLQRSIIVVPRVNTRFFLFLWNYYVYECESILFSLLKRSSHSRSLAHRPFPQRTHFHRKIKHIIIFSRRNSLKSIWLLKDPKINYVRYGERSIIAIKGTHLLVKKCRYYLLLFRQCYFHLWSEPYRVCSHQLSKNCSSSPGYFLRVRMNPLFVRTKMLDELFIADLITNEFDPIVPIVPILGLLAREKFCDVSGRPISKLSWTNLTDDDILNRFDQIWRNLFHYYSGSFGRDGLYRIKYILSLSCAKTLACKHKSTIRVVRKELGPELFQKSFSKEREFDSLPFSSKAAARSQRERIWHSDIPQINPLVNSWQKIQDLKIENLFDQ.

It belongs to the intron maturase 2 family. MatK subfamily.

It is found in the plastid. It localises to the chloroplast. Functionally, usually encoded in the trnK tRNA gene intron. Probably assists in splicing its own and other chloroplast group II introns. The polypeptide is Maturase K (Pinus sibirica (Siberian pine)).